A 248-amino-acid chain; its full sequence is 1-(5-phosphoribosyl)-5-[(5-phosphoribosylamino)methylideneamino] imidazole-4-carboxamide isomerase (248 aa).

The active-site Proton acceptor is the Asp-8. The active-site Proton donor is Asp-131.

Belongs to the HisA/HisF family.

It is found in the cytoplasm. It catalyses the reaction 1-(5-phospho-beta-D-ribosyl)-5-[(5-phospho-beta-D-ribosylamino)methylideneamino]imidazole-4-carboxamide = 5-[(5-phospho-1-deoxy-D-ribulos-1-ylimino)methylamino]-1-(5-phospho-beta-D-ribosyl)imidazole-4-carboxamide. It functions in the pathway amino-acid biosynthesis; L-histidine biosynthesis; L-histidine from 5-phospho-alpha-D-ribose 1-diphosphate: step 4/9. This is 1-(5-phosphoribosyl)-5-[(5-phosphoribosylamino)methylideneamino] imidazole-4-carboxamide isomerase from Nitrosomonas eutropha (strain DSM 101675 / C91 / Nm57).